A 132-amino-acid polypeptide reads, in one-letter code: Small ribosomal subunit protein uS8 (132 aa).

The protein belongs to the universal ribosomal protein uS8 family. As to quaternary structure, part of the 30S ribosomal subunit. Contacts proteins S5 and S12.

Its function is as follows. One of the primary rRNA binding proteins, it binds directly to 16S rRNA central domain where it helps coordinate assembly of the platform of the 30S subunit. In Borrelia duttonii (strain Ly), this protein is Small ribosomal subunit protein uS8.